The primary structure comprises 582 residues: Adenine deaminase (582 aa).

The protein belongs to the metallo-dependent hydrolases superfamily. Adenine deaminase family. Requires Mn(2+) as cofactor.

The enzyme catalyses adenine + H2O + H(+) = hypoxanthine + NH4(+). The chain is Adenine deaminase from Oceanobacillus iheyensis (strain DSM 14371 / CIP 107618 / JCM 11309 / KCTC 3954 / HTE831).